Reading from the N-terminus, the 274-residue chain is Transcriptional activator PerA (274 aa).

The HTH araC/xylS-type domain maps to 168 to 265 (DRVIKVIELD…NTTPKKYNGV (98 aa)). DNA-binding regions (H-T-H motif) lie at residues 185–206 (GDVSSSMFMSDSCLRKQLNKEN) and 232–255 (IDEISCLVGFNSTSYFIKVFKEYY).

Could help in the transcriptional activator of eaeA expression in enteropathogenic E.coli. However, it seems that it is PerC which acts as an activator. The sequence is that of Transcriptional activator PerA (perA) from Escherichia coli O127:H6 (strain E2348/69 / EPEC).